The primary structure comprises 671 residues: MKPPAGMVFLWVLTSLGAGIGAKIVKEGNPHQVYTLTWQIYSQSGEVVWEVQGNHALNTWWPALTPDFCQLAAGLDTWDIPDRSPKNLETSMEGTSQQLTPQGCSKPWKRCALTERDFYVCPRDNRDRATAHRCGGYEEYFCSAWGCETTGDAYWQPTSTWDLITITRNYTKPDSCDDRVERERKTSRHWRDPLSLPLKITFTDSGKRALGWQTGYTWGLRWYLPGKDRGIILKIKLKIDTITQTVGPNLVLADQKTPVQLAIPVQPPRAPTQTPRVNPVNSTLSPSLGYPAPAPGPRPPYPTSPSRPGTGDRLLNLVQGVYLTLNLTAPNQTQDCWLCLTAKPPYYQGVAIIGNFTNHTNAPLRCSTTPRHGLTLTEVTGYGLCIGKIPPSHQNLCSQTVPSVGQGPYYLTAPNGTYWVCNTGLTPCISLQILNDTADYCILIELWPKIFYHDSEYIYGHYEPGGRFRRDPVSLTVALLLGGLTMGSLAAGIGTGTAALIETNQFKQLQIAMHSDIQALEESISALERSLISLSEVVLQNRRGLDLLFLQEGGLCAALKEECCFYADHTGIVRDSMAKLRERFKQRQKLFESQQGWFEGWYNKSPWFTTLVSSLMVPLILLLLILMFGPCILNHLLQFIRERLSVIQALVLTQQYHQLRQFDAERPDAIE.

The signal sequence occupies residues 1 to 22 (MKPPAGMVFLWVLTSLGAGIGA). Over 23-611 (KIVKEGNPHQ…YNKSPWFTTL (589 aa)) the chain is Extracellular. 2 disulfides stabilise this stretch: Cys121–Cys142 and Cys134–Cys147. Residues Asn169 and Asn281 are each glycosylated (N-linked (GlcNAc...) asparagine; by host). The disordered stretch occupies residues 265–310 (VQPPRAPTQTPRVNPVNSTLSPSLGYPAPAPGPRPPYPTSPSRPGT). Residues 271 to 286 (PTQTPRVNPVNSTLSP) are compositionally biased toward polar residues. Residues 292-305 (APAPGPRPPYPTSP) are compositionally biased toward pro residues. Residues Asn326 and Asn331 are each glycosylated (N-linked (GlcNAc...) asparagine; by host). A CXXC motif is present at residues 336–339 (CWLC). Residues Asn355, Asn358, Asn415, and Asn435 are each glycosylated (N-linked (GlcNAc...) asparagine; by host). A fusion peptide region spans residues 473–493 (VSLTVALLLGGLTMGSLAAGI). 2 coiled-coil regions span residues 501-550 (IETN…LLFL) and 560-596 (KEECCFYADHTGIVRDSMAKLRERFKQRQKLFESQQG). The immunosuppression stretch occupies residues 539-555 (LQNRRGLDLLFLQEGGL). A CX6CC motif is present at residues 556-564 (CAALKEECC). A helical transmembrane segment spans residues 612-632 (VSSLMVPLILLLLILMFGPCI). Cys631 is lipidated: S-palmitoyl cysteine; by host. Residues 633–671 (LNHLLQFIRERLSVIQALVLTQQYHQLRQFDAERPDAIE) lie on the Cytoplasmic side of the membrane. The YXXL motif; contains endocytosis signal signature appears at 656–659 (YHQL).

The mature envelope protein (Env) consists of a trimer of SU-TM heterodimers attached by noncovalent interactions or by a labile interchain disulfide bond. Post-translationally, specific enzymatic cleavages in vivo yield mature proteins. Envelope glycoproteins are synthesized as an inactive precursor that is N-glycosylated and processed likely by host cell furin or by a furin-like protease in the Golgi to yield the mature SU and TM proteins. The cleavage site between SU and TM requires the minimal sequence [KR]-X-[KR]-R. The R-peptide is released from the C-terminus of the cytoplasmic tail of the TM protein upon particle formation as a result of proteolytic cleavage by the viral protease. Cleavage of this peptide is required for TM to become fusogenic. The transmembrane protein is palmitoylated. In terms of processing, the R-peptide is palmitoylated.

Its subcellular location is the virion membrane. It is found in the host cell membrane. Its function is as follows. The surface protein (SU) attaches the virus to the host cell by binding to its receptor. This interaction triggers the refolding of the transmembrane protein (TM) and is thought to activate its fusogenic potential by unmasking its fusion peptide. Fusion occurs at the host cell plasma membrane. The transmembrane protein (TM) acts as a class I viral fusion protein. Under the current model, the protein has at least 3 conformational states: pre-fusion native state, pre-hairpin intermediate state, and post-fusion hairpin state. During viral and target cell membrane fusion, the coiled coil regions (heptad repeats) assume a trimer-of-hairpins structure, positioning the fusion peptide in close proximity to the C-terminal region of the ectodomain. The formation of this structure appears to drive apposition and subsequent fusion of viral and target cell membranes. Membranes fusion leads to delivery of the nucleocapsid into the cytoplasm. This chain is Envelope glycoprotein (env), found in Felidae (cat family).